Here is a 339-residue protein sequence, read N- to C-terminus: Tryptophan--tRNA ligase (339 aa).

Residues 11-13 (QPT) and 19-20 (GN) contribute to the ATP site. The short motif at 12–20 (PTGAIHIGN) is the 'HIGH' region element. Asp-135 contacts L-tryptophan. ATP is bound by residues 147 to 149 (GED), Ile-191, and 200 to 204 (KMSKS). A 'KMSKS' region motif is present at residues 200-204 (KMSKS).

This sequence belongs to the class-I aminoacyl-tRNA synthetase family. As to quaternary structure, homodimer.

The protein resides in the cytoplasm. It carries out the reaction tRNA(Trp) + L-tryptophan + ATP = L-tryptophyl-tRNA(Trp) + AMP + diphosphate + H(+). Its function is as follows. Catalyzes the attachment of tryptophan to tRNA(Trp). This is Tryptophan--tRNA ligase from Prochlorococcus marinus (strain SARG / CCMP1375 / SS120).